The sequence spans 346 residues: Putative aminopeptidase YhfE (346 aa).

Positions 68 and 185 each coordinate a divalent metal cation. The active-site Proton acceptor is glutamate 219. The a divalent metal cation site is built by glutamate 220, aspartate 240, and histidine 320.

The protein belongs to the peptidase M42 family. Requires a divalent metal cation as cofactor.

The sequence is that of Putative aminopeptidase YhfE (yhfE) from Bacillus subtilis (strain 168).